The sequence spans 482 residues: Catalase (482 aa).

Active-site residues include His-53 and Asn-126. Tyr-336 is a heme binding site.

This sequence belongs to the catalase family. It depends on heme as a cofactor.

Its subcellular location is the periplasm. The enzyme catalyses 2 H2O2 = O2 + 2 H2O. In terms of biological role, decomposes hydrogen peroxide into water and oxygen; serves to protect cells from the toxic effects of hydrogen peroxide. Could protect cells in nodules which have a high potential to produce hydrogen peroxide because of the strong reducing conditions required for nitrogen fixation and the action of several proteins. In Aliivibrio fischeri (strain ATCC 700601 / ES114) (Vibrio fischeri), this protein is Catalase (katA).